Reading from the N-terminus, the 66-residue chain is Large ribosomal subunit protein uL29 (66 aa).

The protein belongs to the universal ribosomal protein uL29 family.

In Borreliella afzelii (strain PKo) (Borrelia afzelii), this protein is Large ribosomal subunit protein uL29.